The sequence spans 207 residues: LexA repressor (207 aa).

Residues 29–49 (VREICSAVDLSSTSTVHGHLA) constitute a DNA-binding region (H-T-H motif). Residues S128 and K166 each act as for autocatalytic cleavage activity in the active site.

Belongs to the peptidase S24 family. In terms of assembly, homodimer.

The catalysed reaction is Hydrolysis of Ala-|-Gly bond in repressor LexA.. Functionally, represses a number of genes involved in the response to DNA damage (SOS response), including recA and lexA. In the presence of single-stranded DNA, RecA interacts with LexA causing an autocatalytic cleavage which disrupts the DNA-binding part of LexA, leading to derepression of the SOS regulon and eventually DNA repair. This chain is LexA repressor, found in Lactobacillus gasseri (strain ATCC 33323 / DSM 20243 / BCRC 14619 / CIP 102991 / JCM 1131 / KCTC 3163 / NCIMB 11718 / NCTC 13722 / AM63).